A 92-amino-acid polypeptide reads, in one-letter code: Progonadoliberin-1 (92 aa).

The first 23 residues, 1–23, serve as a signal peptide directing secretion; that stretch reads MELVPKFLAGLILLTLCVGGCYA. At Gln-24 the chain carries Pyrrolidone carboxylic acid. Gly-33 carries the post-translational modification Glycine amide.

Belongs to the GnRH family.

It localises to the secreted. Functionally, stimulates the secretion of gonadotropins; it stimulates the secretion of both luteinizing and follicle-stimulating hormones. The sequence is that of Progonadoliberin-1 (GNRH1) from Tupaia belangeri (Common tree shrew).